Here is a 337-residue protein sequence, read N- to C-terminus: MSRQAKDDFLRHYTVSDPRTHPKGYTEYKVTAQFISKKDPEDIKEVVVWKRYSDFRKLHGDLAYTHRNLFRRLEEFPAFPRAQVFGRFEASVIEERRKGAEDLLRFTVPIPALNNSPQLKEFFRGGEVTRPSEVSRDLRILPPPLIPTPPPDEARLLQPLPAERRGQEELEVPVDPLPSSPAQEALDLLFSCDSTEEASSSLARGPLSEAELALFDPYSKEESTGPSPTHTGELAAIEVESKRLDQEPWEPGGQEEEEAEDGEPAPAYLGQATELITQALRNEKAGAYAAALQGYQDGVHILLQGVSGDPSPARREGVKKKAAEYLKRAEMLHTHLP.

Residues 1–130 (MSRQAKDDFL…EFFRGGEVTR (130 aa)) enclose the PX domain. A 1,2-diacyl-sn-glycero-3-phospho-(1D-myo-inositol-3-phosphate)-binding residues include Arg-51, Ser-53, Arg-87, and Arg-96. Arg-105 is modified (omega-N-methylarginine). The tract at residues 133 to 156 (EVSRDLRILPPPLIPTPPPDEARL) is disordered. Over residues 141-151 (LPPPLIPTPPP) the composition is skewed to pro residues. Residues Ser-201 and Ser-227 each carry the phosphoserine modification. The interval 244–270 (LDQEPWEPGGQEEEEAEDGEPAPAYLG) is disordered. Acidic residues predominate over residues 253 to 263 (GQEEEEAEDGE). Positions 265–337 (APAYLGQATE…RAEMLHTHLP (73 aa)) constitute an MIT domain.

This sequence belongs to the sorting nexin family. As to quaternary structure, homodimer. Interacts with SNX1, SNX2 and SNX4.

It localises to the cytoplasm. The protein localises to the membrane. It is found in the cytoplasmic vesicle membrane. In terms of biological role, may be involved in several stages of intracellular trafficking. Overexpression of SNX15 disrupts the normal trafficking of proteins from the plasma membrane to recycling endosomes or the TGN. The chain is Sorting nexin-15 (Snx15) from Mus musculus (Mouse).